The sequence spans 387 residues: 4-hydroxy-3-methylbut-2-en-1-yl diphosphate synthase (flavodoxin) (387 aa).

The [4Fe-4S] cluster site is built by Cys272, Cys275, Cys307, and Glu314.

Belongs to the IspG family. It depends on [4Fe-4S] cluster as a cofactor.

It catalyses the reaction (2E)-4-hydroxy-3-methylbut-2-enyl diphosphate + oxidized [flavodoxin] + H2O + 2 H(+) = 2-C-methyl-D-erythritol 2,4-cyclic diphosphate + reduced [flavodoxin]. It participates in isoprenoid biosynthesis; isopentenyl diphosphate biosynthesis via DXP pathway; isopentenyl diphosphate from 1-deoxy-D-xylulose 5-phosphate: step 5/6. Converts 2C-methyl-D-erythritol 2,4-cyclodiphosphate (ME-2,4cPP) into 1-hydroxy-2-methyl-2-(E)-butenyl 4-diphosphate. This is 4-hydroxy-3-methylbut-2-en-1-yl diphosphate synthase (flavodoxin) from Granulibacter bethesdensis (strain ATCC BAA-1260 / CGDNIH1).